Reading from the N-terminus, the 314-residue chain is Ribosomal RNA small subunit methyltransferase H (314 aa).

S-adenosyl-L-methionine-binding positions include glycine 32–histidine 34, aspartate 52, phenylalanine 79, aspartate 100, and glutamine 107.

The protein belongs to the methyltransferase superfamily. RsmH family.

The protein localises to the cytoplasm. It catalyses the reaction cytidine(1402) in 16S rRNA + S-adenosyl-L-methionine = N(4)-methylcytidine(1402) in 16S rRNA + S-adenosyl-L-homocysteine + H(+). Specifically methylates the N4 position of cytidine in position 1402 (C1402) of 16S rRNA. This Shouchella clausii (strain KSM-K16) (Alkalihalobacillus clausii) protein is Ribosomal RNA small subunit methyltransferase H.